The following is a 347-amino-acid chain: D-fructose 1,6-bisphosphatase class 2/sedoheptulose 1,7-bisphosphatase (347 aa).

Mn(2+)-binding residues include aspartate 33, glutamate 57, aspartate 97, and glutamate 100. Substrate-binding positions include glutamate 100–threonine 102, tyrosine 131, arginine 176–arginine 178, and aspartate 198–aspartate 200. Glutamate 225 is a binding site for Mn(2+).

It belongs to the FBPase class 2 family. In terms of assembly, homotetramer. The cofactor is Mn(2+).

The enzyme catalyses beta-D-fructose 1,6-bisphosphate + H2O = beta-D-fructose 6-phosphate + phosphate. It carries out the reaction D-sedoheptulose 1,7-bisphosphate + H2O = D-sedoheptulose 7-phosphate + phosphate. Its pathway is carbohydrate biosynthesis; Calvin cycle. In terms of biological role, catalyzes the hydrolysis of fructose 1,6-bisphosphate (Fru 1,6-P2) and sedoheptulose 1,7-bisphosphate (Sed 1,7-P2) to fructose 6-phosphate and sedoheptulose 7-phosphate, respectively. The protein is D-fructose 1,6-bisphosphatase class 2/sedoheptulose 1,7-bisphosphatase of Synechococcus sp. (strain JA-2-3B'a(2-13)) (Cyanobacteria bacterium Yellowstone B-Prime).